The primary structure comprises 234 residues: UDP-2,3-diacylglucosamine hydrolase (234 aa).

Positions 9, 11, 42, 80, and 115 each coordinate Mn(2+). Position 80 to 81 (80 to 81) interacts with substrate; sequence NR. Positions 123, 161, 165, 168, and 196 each coordinate substrate. 2 residues coordinate Mn(2+): His196 and His198.

Belongs to the LpxH family. It depends on Mn(2+) as a cofactor.

It localises to the cell inner membrane. It carries out the reaction UDP-2-N,3-O-bis[(3R)-3-hydroxytetradecanoyl]-alpha-D-glucosamine + H2O = 2-N,3-O-bis[(3R)-3-hydroxytetradecanoyl]-alpha-D-glucosaminyl 1-phosphate + UMP + 2 H(+). Its pathway is glycolipid biosynthesis; lipid IV(A) biosynthesis; lipid IV(A) from (3R)-3-hydroxytetradecanoyl-[acyl-carrier-protein] and UDP-N-acetyl-alpha-D-glucosamine: step 4/6. Its function is as follows. Hydrolyzes the pyrophosphate bond of UDP-2,3-diacylglucosamine to yield 2,3-diacylglucosamine 1-phosphate (lipid X) and UMP by catalyzing the attack of water at the alpha-P atom. Involved in the biosynthesis of lipid A, a phosphorylated glycolipid that anchors the lipopolysaccharide to the outer membrane of the cell. This Histophilus somni (strain 129Pt) (Haemophilus somnus) protein is UDP-2,3-diacylglucosamine hydrolase.